The primary structure comprises 601 residues: Coronin-like protein crn1 (601 aa).

WD repeat units lie at residues 79-119 (GHTA…TVME), 132-172 (GHSR…AHVS), 174-213 (KMDV…PVSV), 220-260 (AKNP…EPIG), and 266-306 (DTGS…FHYL). Disordered regions lie at residues 361–386 (SDIY…KDAQ) and 407–540 (SATV…VEEK). Composition is skewed to basic and acidic residues over residues 419–429 (KHNEEKVETPK), 437–453 (KPKE…EPEV), and 462–495 (KVEE…EKSF). S500 and S501 each carry phosphoserine. Residues 507-526 (EDVKKEPSEEKKLEVSDEAP) show a composition bias toward basic and acidic residues. S553 is modified (phosphoserine). Positions 556 to 600 (NLADLNKRFEGFEKRYEEELAIRDWKIAQLEDKLAKLTEAIKEKC) form a coiled coil.

Belongs to the WD repeat coronin family. As to quaternary structure, binds to F-actin.

In Schizosaccharomyces pombe (strain 972 / ATCC 24843) (Fission yeast), this protein is Coronin-like protein crn1 (crn1).